The chain runs to 352 residues: Biotin synthase (352 aa).

The Radical SAM core domain maps to 44–262; it reads NRVQVSTLLS…LAVARILMPQ (219 aa). The [4Fe-4S] cluster site is built by cysteine 59, cysteine 63, and cysteine 66. [2Fe-2S] cluster-binding residues include cysteine 103, cysteine 134, cysteine 194, and arginine 266.

This sequence belongs to the radical SAM superfamily. Biotin synthase family. In terms of assembly, homodimer. It depends on [4Fe-4S] cluster as a cofactor. Requires [2Fe-2S] cluster as cofactor.

The enzyme catalyses (4R,5S)-dethiobiotin + (sulfur carrier)-SH + 2 reduced [2Fe-2S]-[ferredoxin] + 2 S-adenosyl-L-methionine = (sulfur carrier)-H + biotin + 2 5'-deoxyadenosine + 2 L-methionine + 2 oxidized [2Fe-2S]-[ferredoxin]. The protein operates within cofactor biosynthesis; biotin biosynthesis; biotin from 7,8-diaminononanoate: step 2/2. Its function is as follows. Catalyzes the conversion of dethiobiotin (DTB) to biotin by the insertion of a sulfur atom into dethiobiotin via a radical-based mechanism. The sequence is that of Biotin synthase from Pseudomonas savastanoi pv. phaseolicola (strain 1448A / Race 6) (Pseudomonas syringae pv. phaseolicola (strain 1448A / Race 6)).